The sequence spans 492 residues: Falcipain-3 (492 aa).

The Cytoplasmic segment spans residues 1-35; sequence MEYHMEYSPNEVIKQEREVFVGKEKSGSKFKRKRS. Residues 1–242 constitute a propeptide, activation peptide; the sequence is MEYHMEYSPN…LNLKTHGPFK (242 aa). The Bipartite vacuolar targeting signal 1 signature appears at 16 to 25; it reads EREVFVGKEK. A helical; Signal-anchor for type II membrane protein transmembrane segment spans residues 36–56; that stretch reads IFIVLTVSICFMFALMLFYFT. Over 57–492 the chain is Lumenal; that stretch reads RNENNKTLFT…GTEAYVPLLE (436 aa). N61 carries N-linked (GlcNAc...) asparagine glycosylation. The Bipartite vacuolar targeting signal 2 motif lies at 84–105; that stretch reads KSESGKKFIVSKLEELISSYDK. An N-linked (GlcNAc...) asparagine glycan is attached at N129. Residues 251-268 carry the Nose motif; required for the correct folding of the mature form motif; that stretch reads EANYEDVIKKYKPADAKL. 4 disulfides stabilise this stretch: C290–C331, C324–C365, C350–C370, and C419–C480. C293 is an active-site residue. H425 is an active-site residue. The Arm motif; binds to host hemoglobin and required for the inhibitory interaction between the propeptide and the catalytic domain signature appears at 436–445; that stretch reads DIYNEDTGRM. Residue N455 is part of the active site.

This sequence belongs to the peptidase C1 family. Post-translationally, auto-cleavage occurs at acidic pH. The proenzyme is the predominant form in late trophozoites and both the pro and mature enzyme are present in schizonts.

It is found in the membrane. Its subcellular location is the vacuole. It localises to the cytoplasmic vesicle membrane. Its activity is regulated as follows. Inhibited by cysteine protease inhibitor ICP. Its function is as follows. Cysteine protease which cleaves native host hemoglobin and globin in the food vacuole during the asexual blood stage. Preferentially cleaves substrates which have an arginine at the P1 position and a leucine at the P2 position. In Plasmodium falciparum (isolate 3D7), this protein is Falcipain-3.